Consider the following 333-residue polypeptide: Mitochondrial thiamine pyrophosphate carrier 1 (333 aa).

3 Solcar repeats span residues 12-115 (GSRL…ITQF), 129-215 (PPSV…LRPR), and 222-318 (PYSS…ALKL). The next 6 helical transmembrane spans lie at 17 to 35 (VTAA…IAPL), 96 to 112 (LLYV…YRSI), 135 to 155 (FIAG…LDLL), 190 to 209 (GLGP…FCVY), 221 to 238 (LPYS…SVMA), and 293 to 310 (GLTV…VTMW).

The protein belongs to the mitochondrial carrier (TC 2.A.29) family.

The protein resides in the mitochondrion inner membrane. In terms of biological role, mitochondrial transporter that mediates uptake of thiamine pyrophosphate (ThPP) into mitochondria. The polypeptide is Mitochondrial thiamine pyrophosphate carrier 1 (tpc-1) (Neurospora crassa (strain ATCC 24698 / 74-OR23-1A / CBS 708.71 / DSM 1257 / FGSC 987)).